The following is a 131-amino-acid chain: Profilin (131 aa).

The protein belongs to the profilin family. As to quaternary structure, occurs in many kinds of cells as a complex with monomeric actin in a 1:1 ratio.

The protein localises to the cytoplasm. It is found in the cytoskeleton. Functionally, binds to actin and affects the structure of the cytoskeleton. At high concentrations, profilin prevents the polymerization of actin, whereas it enhances it at low concentrations. By binding to PIP2, it inhibits the formation of IP3 and DG. This Chenopodium album (Fat hen) protein is Profilin.